The following is a 219-amino-acid chain: Large ribosomal subunit protein bL25 (219 aa).

Residues 195–219 (EETTTTETSNEPEVIKKGKKEEEEK) form a disordered region. Positions 197–206 (TTTTETSNEP) are enriched in low complexity. Basic and acidic residues predominate over residues 207 to 219 (EVIKKGKKEEEEK).

The protein belongs to the bacterial ribosomal protein bL25 family. CTC subfamily. Part of the 50S ribosomal subunit; part of the 5S rRNA/L5/L18/L25 subcomplex. Contacts the 5S rRNA. Binds to the 5S rRNA independently of L5 and L18.

This is one of the proteins that binds to the 5S RNA in the ribosome where it forms part of the central protuberance. This chain is Large ribosomal subunit protein bL25, found in Fervidobacterium nodosum (strain ATCC 35602 / DSM 5306 / Rt17-B1).